Consider the following 99-residue polypeptide: Aspartyl/glutamyl-tRNA(Asn/Gln) amidotransferase subunit C (99 aa).

The protein belongs to the GatC family. As to quaternary structure, heterotrimer of A, B and C subunits.

It carries out the reaction L-glutamyl-tRNA(Gln) + L-glutamine + ATP + H2O = L-glutaminyl-tRNA(Gln) + L-glutamate + ADP + phosphate + H(+). It catalyses the reaction L-aspartyl-tRNA(Asn) + L-glutamine + ATP + H2O = L-asparaginyl-tRNA(Asn) + L-glutamate + ADP + phosphate + 2 H(+). Its function is as follows. Allows the formation of correctly charged Asn-tRNA(Asn) or Gln-tRNA(Gln) through the transamidation of misacylated Asp-tRNA(Asn) or Glu-tRNA(Gln) in organisms which lack either or both of asparaginyl-tRNA or glutaminyl-tRNA synthetases. The reaction takes place in the presence of glutamine and ATP through an activated phospho-Asp-tRNA(Asn) or phospho-Glu-tRNA(Gln). This is Aspartyl/glutamyl-tRNA(Asn/Gln) amidotransferase subunit C from Polaromonas sp. (strain JS666 / ATCC BAA-500).